A 1875-amino-acid polypeptide reads, in one-letter code: Protein MLP1 (1875 aa).

N-acetylserine is present on Ser2. 2 coiled-coil regions span residues 69-487 (ELKA…IQYL) and 531-1678 (ERLV…SAES). Thr337 carries the post-translational modification Phosphothreonine. A Phosphoserine modification is found at Ser379. Positions 1496–1565 (QPSNINMEEI…EEKVEERIKS (70 aa)) match the Required for nuclear localization motif. Residues 1641–1689 (KKSFDEGKQQAMMKTTLLERKLAKMESQLSETKQSAESPPKSVNNVQNP) form a disordered region. The span at 1667 to 1688 (SQLSETKQSAESPPKSVNNVQN) shows a compositional bias: polar residues. Phosphoserine occurs at positions 1670 and 1710. Over residues 1716–1725 (KLNSKSSSGG) the composition is skewed to low complexity. A disordered region spans residues 1716 to 1875 (KLNSKSSSGG…TDKVNDENSI (160 aa)). The span at 1728 to 1737 (PFTSPSPNKH) shows a compositional bias: polar residues. At Ser1733 the chain carries Phosphoserine. Residues 1738–1748 (LQNDNDKRESL) show a composition bias toward basic and acidic residues. The segment covering 1787–1801 (TSNNPAQKDSSNRNV) has biased composition (polar residues). The residue at position 1803 (Ser1803) is a Phosphoserine. Composition is skewed to basic and acidic residues over residues 1807-1840 (TEKK…GELK) and 1865-1875 (ETDKVNDENSI). The stretch at 1834 to 1866 (DEVGELKNDEDDTTENINESKKIKTEDEEEKET) forms a coiled coil.

As to quaternary structure, component of the nuclear pore complex (NPC). NPC constitutes the exclusive means of nucleocytoplasmic transport. NPCs allow the passive diffusion of ions and small molecules and the active, nuclear transport receptor-mediated bidirectional transport of macromolecules such as proteins, RNAs, ribonucleoparticles (RNPs), and ribosomal subunits across the nuclear envelope. Due to its 8-fold rotational symmetry, all subunits are present with 8 copies or multiples thereof. Interacts with NAB2, a hnRNP required for mRNA export. Interacts with MLP2. Post-translationally, may be phosphorylated by CDC28.

The protein resides in the nucleus. Its subcellular location is the nuclear pore complex. Functionally, together with the closely related MLP2, involved in the structural and functional organization of perinuclear chromatin. Together with MLP2, associates with the nuclear pore complex and form filamentous structures along the nuclear periphery. Has a role in the localization of Esc1 to nucleolar regions. Together with MLP2, mediates tethering of the some telomeres to the nuclear periphery, probably mediated by YKU70/YKU80 (HDF1/HDF2) heterodimer and show perinuclear location dependent silencing. MLP1 and MLP2 are involved in telomere length regulation but not silencing or telomere anchoring. Recognizes the 5'-splice site of pre-mRNAs and retains unspliced pre-mRNA in the nucleus without affecting splicing itself. The chain is Protein MLP1 (MLP1) from Saccharomyces cerevisiae (strain ATCC 204508 / S288c) (Baker's yeast).